We begin with the raw amino-acid sequence, 119 residues long: Large ribosomal subunit protein uL18 (119 aa).

It belongs to the universal ribosomal protein uL18 family. In terms of assembly, part of the 50S ribosomal subunit; part of the 5S rRNA/L5/L18/L25 subcomplex. Contacts the 5S and 23S rRNAs.

Functionally, this is one of the proteins that bind and probably mediate the attachment of the 5S RNA into the large ribosomal subunit, where it forms part of the central protuberance. In Nitratidesulfovibrio vulgaris (strain DP4) (Desulfovibrio vulgaris), this protein is Large ribosomal subunit protein uL18.